A 589-amino-acid polypeptide reads, in one-letter code: Outer envelope protein 64, chloroplastic (589 aa).

Methionine 1 is a topological domain (chloroplast intermembrane). A helical transmembrane segment spans residues 2-22; it reads ASQAANLWVLLGLGLAGILML. Over 23–141 the chain is Cytoplasmic; that stretch reads TKKLKKTVRE…NPAAPTRIPG (119 aa). The chain crosses the membrane as a helical span at residues 142 to 162; that stretch reads GACSGAAVAVATNAVDFALGI. Residues 163–398 lie on the Chloroplast intermembrane side of the membrane; sequence DTVGGVRVPA…EITSEDYQNR (236 aa). Residues 399 to 419 form a helical membrane-spanning segment; that stretch reads ASSLLSIASISGCCQVTVPLG. At 420-589 the chain is on the cytoplasmic side; sequence HHEKCPISVS…LSAERLRKFQ (170 aa). TPR repeat units follow at residues 474–507, 508–541, and 542–575; these read AEIA…SDNN, ATYY…DKKN, and VKAY…EPNN.

As to quaternary structure, part of the Toc complex and of the intermembrane space complex. Expressed in roots, cotyledons, leaves and flower buds.

Its subcellular location is the plastid. It localises to the chloroplast outer membrane. Functionally, chaperone receptor mediating Hsp90-dependent protein targeting to chloroplasts. Bi-functional preprotein receptor acting on both sides of the membrane. Not essential for an efficient import of pre-proteins into plastids. The protein is Outer envelope protein 64, chloroplastic (OEP64) of Arabidopsis thaliana (Mouse-ear cress).